The following is a 1129-amino-acid chain: Tyrosine-protein kinase JAK2 (1129 aa).

In terms of domain architecture, FERM spans 35–378 (PLLQVYLYYS…GYYRLTADAH (344 aa)). Position 117 is a phosphotyrosine; by autocatalysis (Tyr-117). The SH2; atypical domain occupies 399 to 480 (HGPIFMDFAI…NLKDLLTCYQ (82 aa)). Protein kinase domains lie at 542–806 (LIFE…NSLF) and 846–1118 (LKFL…DLAQ). 852-860 (LGKGNFGSV) is an ATP binding site. Tyr-865 is modified (phosphotyrosine; by autocatalysis). Lys-879 is an ATP binding site. Tyr-963 and Tyr-969 each carry phosphotyrosine; by autocatalysis. Asp-973 (proton acceptor) is an active-site residue. Tyr-1004 and Tyr-1005 each carry phosphotyrosine; by autocatalysis.

This sequence belongs to the protein kinase superfamily. Tyr protein kinase family. JAK subfamily. Post-translationally, autophosphorylated, leading to regulate its activity.

It localises to the endomembrane system. Its subcellular location is the nucleus. It carries out the reaction L-tyrosyl-[protein] + ATP = O-phospho-L-tyrosyl-[protein] + ADP + H(+). Its activity is regulated as follows. Regulated by autophosphorylation, can both activate or decrease activity. Heme regulates its activity by enhancing the phosphorylation on Tyr-1004 and Tyr-1005. In terms of biological role, non-receptor tyrosine kinase involved in various processes such as cell growth, development, differentiation or histone modifications. Mediates essential signaling events in both innate and adaptive immunity. In the cytoplasm, plays a pivotal role in signal transduction via its association with cytokine receptors. Following ligand-binding to cell surface receptors, phosphorylates specific tyrosine residues on the cytoplasmic tails of the receptor, creating docking sites for STATs proteins. Subsequently, phosphorylates the STATs proteins once they are recruited to the receptor. Phosphorylated STATs then form homodimer or heterodimers and translocate to the nucleus to activate gene transcription. For example, cell stimulation with erythropoietin (EPO) during erythropoiesis leads to JAK2 autophosphorylation, activation, and its association with erythropoietin receptor (EPOR) that becomes phosphorylated in its cytoplasmic domain. Then, STAT5 (STAT5A or STAT5B) is recruited, phosphorylated and activated by JAK2. Once activated, dimerized STAT5 translocates into the nucleus and promotes the transcription of several essential genes involved in the modulation of erythropoiesis. Part of a signaling cascade that is activated by increased cellular retinol and that leads to the activation of STAT5 (STAT5A or STAT5B). In the nucleus, plays a key role in chromatin by specifically mediating phosphorylation of 'Tyr-41' of histone H3 (H3Y41ph), a specific tag that promotes exclusion of CBX5 (HP1 alpha) from chromatin. Up-regulates the potassium voltage-gated channel activity of KCNA3. The polypeptide is Tyrosine-protein kinase JAK2 (Gallus gallus (Chicken)).